The sequence spans 219 residues: Large ribosomal subunit protein uL1 (219 aa).

This sequence belongs to the universal ribosomal protein uL1 family. Part of the 50S ribosomal subunit.

In terms of biological role, binds directly to 23S rRNA. Probably involved in E site tRNA release. Its function is as follows. Protein L1 is also a translational repressor protein, it controls the translation of its operon by binding to its mRNA. In Pyrococcus abyssi (strain GE5 / Orsay), this protein is Large ribosomal subunit protein uL1.